A 116-amino-acid polypeptide reads, in one-letter code: Large ribosomal subunit protein uL22c (116 aa).

It belongs to the universal ribosomal protein uL22 family. As to quaternary structure, part of the 50S ribosomal subunit.

The protein localises to the plastid. The protein resides in the chloroplast. This protein binds specifically to 23S rRNA. Its function is as follows. The globular domain of the protein is located near the polypeptide exit tunnel on the outside of the subunit, while an extended beta-hairpin is found that lines the wall of the exit tunnel in the center of the 70S ribosome. The sequence is that of Large ribosomal subunit protein uL22c (rpl22) from Psilotum nudum (Whisk fern).